Consider the following 468-residue polypeptide: Envelope glycoprotein C (468 aa).

The first 30 residues, 1–30, serve as a signal peptide directing secretion; sequence MWLPNLVRFVAVAYLICAGAILTYASGASA. The span at 31-50 shows a compositional bias: low complexity; the sequence is SSSQSTPATPTHTTPNLTTA. The disordered stretch occupies residues 31 to 73; that stretch reads SSSQSTPATPTHTTPNLTTAHGAGSDNTTNANGTESTHSHETT. Topologically, residues 31-431 are virion surface; it reads SSSQSTPATP…IVEDRPVLTS (401 aa). Residues Asn46, Asn57, Asn62, Asn92, Asn100, Asn131, Asn203, Asn208, and Asn269 are each glycosylated (N-linked (GlcNAc...) asparagine; by host). Cys76 and Cys93 are joined by a disulfide. 2 consecutive Ig-like domains span residues 220–311 and 321–416; these read PLLD…DEVS and PSVF…DTVV. Disulfide bonds link Cys239–Cys301, Cys340–Cys399, and Cys344–Cys373. The helical transmembrane segment at 432–451 threads the bilayer; that stretch reads IIAVTCGAAALALVVLITAV. At 452–468 the chain is on the cytoplasmic side; that stretch reads CFYCSKPSQAPYKKSDF.

It belongs to the herpesviridae glycoprotein C family. As to quaternary structure, interacts with host complement component C3; this interaction inhibits host immune response by disregulating complement cascade.

It localises to the virion membrane. Functionally, essential for the initial attachment to heparan sulfate moieties of the host cell surface proteoglycans. Also plays a role in host immune evasion by inhibiting the host complement cascade activation. In Equus caballus (Horse), this protein is Envelope glycoprotein C (gC).